Reading from the N-terminus, the 212-residue chain is ATP phosphoribosyltransferase (212 aa).

Belongs to the ATP phosphoribosyltransferase family. Short subfamily. Heteromultimer composed of HisG and HisZ subunits.

It localises to the cytoplasm. It catalyses the reaction 1-(5-phospho-beta-D-ribosyl)-ATP + diphosphate = 5-phospho-alpha-D-ribose 1-diphosphate + ATP. It participates in amino-acid biosynthesis; L-histidine biosynthesis; L-histidine from 5-phospho-alpha-D-ribose 1-diphosphate: step 1/9. Its function is as follows. Catalyzes the condensation of ATP and 5-phosphoribose 1-diphosphate to form N'-(5'-phosphoribosyl)-ATP (PR-ATP). Has a crucial role in the pathway because the rate of histidine biosynthesis seems to be controlled primarily by regulation of HisG enzymatic activity. The sequence is that of ATP phosphoribosyltransferase from Albidiferax ferrireducens (strain ATCC BAA-621 / DSM 15236 / T118) (Rhodoferax ferrireducens).